The primary structure comprises 342 residues: L-lysine 2,3-aminomutase (342 aa).

Positions 106 to 329 constitute a Radical SAM core domain; it reads HKYHNRALLL…PKLAREIGGE (224 aa). [4Fe-4S] cluster contacts are provided by Cys-120, Cys-124, and Cys-127. Lys-332 is subject to N6-(pyridoxal phosphate)lysine.

It belongs to the radical SAM superfamily. KamA family. Requires [4Fe-4S] cluster as cofactor. Pyridoxal 5'-phosphate is required as a cofactor.

The enzyme catalyses L-lysine = D-beta-lysine. With EpmA is involved in the beta-lysylation step of the post-translational modification of translation elongation factor P (EF-P) on 'Lys-34'. EpmB appears to act before EpmA. Displays lysine 2,3-aminomutase activity, producing (R)-beta-lysine from (S)-alpha-lysine (L-lysine). Cannot use (S)-ornithine or (R)-alpha-lysine as a substrate. The protein is L-lysine 2,3-aminomutase (epmB) of Escherichia coli (strain K12).